Here is a 97-residue protein sequence, read N- to C-terminus: Co-chaperonin GroES (97 aa).

This sequence belongs to the GroES chaperonin family. Heptamer of 7 subunits arranged in a ring. Interacts with the chaperonin GroEL.

It localises to the cytoplasm. Its function is as follows. Together with the chaperonin GroEL, plays an essential role in assisting protein folding. The GroEL-GroES system forms a nano-cage that allows encapsulation of the non-native substrate proteins and provides a physical environment optimized to promote and accelerate protein folding. GroES binds to the apical surface of the GroEL ring, thereby capping the opening of the GroEL channel. This Pseudomonas putida (strain W619) protein is Co-chaperonin GroES.